Reading from the N-terminus, the 132-residue chain is Cytidine deaminase (132 aa).

In terms of domain architecture, CMP/dCMP-type deaminase spans 1–128 (MDRQMLIKEA…ELLPGAFTAE (128 aa)). 42 to 44 (NIE) provides a ligand contact to substrate. Cysteine 53 contacts Zn(2+). Glutamate 55 serves as the catalytic Proton donor. Positions 86 and 89 each coordinate Zn(2+).

It belongs to the cytidine and deoxycytidylate deaminase family. Zn(2+) is required as a cofactor.

It carries out the reaction cytidine + H2O + H(+) = uridine + NH4(+). The enzyme catalyses 2'-deoxycytidine + H2O + H(+) = 2'-deoxyuridine + NH4(+). Its function is as follows. This enzyme scavenges exogenous and endogenous cytidine and 2'-deoxycytidine for UMP synthesis. This chain is Cytidine deaminase (cdd), found in Halalkalibacterium halodurans (strain ATCC BAA-125 / DSM 18197 / FERM 7344 / JCM 9153 / C-125) (Bacillus halodurans).